The following is a 194-amino-acid chain: Inner membrane-spanning protein YciB (194 aa).

The next 5 helical transmembrane spans lie at 1 to 21 (MKLL…KTTN), 49 to 69 (EKMH…TILF), 77 to 97 (WKPS…GWVS), 120 to 140 (LNYS…YVAY), and 150 to 170 (FKLF…GVYI).

Belongs to the YciB family.

It is found in the cell inner membrane. Functionally, plays a role in cell envelope biogenesis, maintenance of cell envelope integrity and membrane homeostasis. The sequence is that of Inner membrane-spanning protein YciB from Hahella chejuensis (strain KCTC 2396).